We begin with the raw amino-acid sequence, 355 residues long: Alanine racemase (355 aa).

K34 acts as the Proton acceptor; specific for D-alanine in catalysis. K34 carries the post-translational modification N6-(pyridoxal phosphate)lysine. R133 is a substrate binding site. The active-site Proton acceptor; specific for L-alanine is the Y249. M297 contacts substrate.

The protein belongs to the alanine racemase family. Pyridoxal 5'-phosphate is required as a cofactor.

The catalysed reaction is L-alanine = D-alanine. It participates in amino-acid biosynthesis; D-alanine biosynthesis; D-alanine from L-alanine: step 1/1. Catalyzes the interconversion of L-alanine and D-alanine. May also act on other amino acids. This Rickettsia canadensis (strain McKiel) protein is Alanine racemase (alr).